Here is a 554-residue protein sequence, read N- to C-terminus: Glutamine--tRNA ligase (554 aa).

The 'HIGH' region motif lies at 34-44 (PEPNGYLHIGH). ATP contacts are provided by residues 35–37 (EPN) and 41–47 (HIGHAKS). 2 residues coordinate L-glutamine: D67 and Y212. ATP-binding positions include T231, 261 to 262 (RL), and 269 to 271 (MSK). Residues 268-272 (VMSKR) carry the 'KMSKS' region motif. An interaction with tRNA region spans residues 317–324 (TKQDNTIE).

It belongs to the class-I aminoacyl-tRNA synthetase family. Monomer.

The protein resides in the cytoplasm. It catalyses the reaction tRNA(Gln) + L-glutamine + ATP = L-glutaminyl-tRNA(Gln) + AMP + diphosphate. This is Glutamine--tRNA ligase from Escherichia coli (strain 55989 / EAEC).